The following is a 263-amino-acid chain: Diphthine synthase (263 aa).

Residues L9, D84, M87, 112–113 (SI), L164, A207, and H232 contribute to the S-adenosyl-L-methionine site.

This sequence belongs to the diphthine synthase family. As to quaternary structure, homodimer.

It carries out the reaction 2-[(3S)-amino-3-carboxypropyl]-L-histidyl-[translation elongation factor 2] + 3 S-adenosyl-L-methionine = diphthine-[translation elongation factor 2] + 3 S-adenosyl-L-homocysteine + 3 H(+). Its pathway is protein modification; peptidyl-diphthamide biosynthesis. Functionally, S-adenosyl-L-methionine-dependent methyltransferase that catalyzes the trimethylation of the amino group of the modified target histidine residue in translation elongation factor 2 (EF-2), to form an intermediate called diphthine. The three successive methylation reactions represent the second step of diphthamide biosynthesis. This is Diphthine synthase from Methanosphaera stadtmanae (strain ATCC 43021 / DSM 3091 / JCM 11832 / MCB-3).